The sequence spans 405 residues: Teichoic acid D-alanyltransferase (405 aa).

Residues Met1 to Asn9 lie on the Extracellular side of the membrane. A helical transmembrane segment spans residues Pro10 to Lys29. Over Gly30–Met33 the chain is Cytoplasmic. Residues His34–Phe49 traverse the membrane as a helical segment. Residues Asp50–Lys53 lie on the Extracellular side of the membrane. A helical membrane pass occupies residues Trp54–Arg80. Topologically, residues Glu81 to Ser86 are cytoplasmic. The helical transmembrane segment at Thr87–Gln111 threads the bilayer. Residues His112 to Gly121 lie on the Extracellular side of the membrane. The helical transmembrane segment at Ile122–Asp138 threads the bilayer. Residues Gly139–Asn145 are Cytoplasmic-facing. An intramembrane segment occupies Met146–Asp175. Residues Arg176–Asp179 are Cytoplasmic-facing. The helical transmembrane segment at Pro180 to Ser223 threads the bilayer. Residues Arg224 to Ser232 are Extracellular-facing. A helical membrane pass occupies residues Trp233–Met264. Over Gly265–Lys274 the chain is Cytoplasmic. The stretch at Pro275 to His310 is an intramembrane region. At Lys311–Ser315 the chain is on the cytoplasmic side. The chain crosses the membrane as a helical span at residues Arg316–His335. The active site involves His335. The Extracellular segment spans residues Gly336–Thr338. A helical transmembrane segment spans residues Trp339–Asn372. Residues Arg373–Pro378 are Cytoplasmic-facing. The helical transmembrane segment at Ser379 to Leu399 threads the bilayer. Topologically, residues Asp400–His405 are extracellular.

Belongs to the membrane-bound acyltransferase family.

Its subcellular location is the cell membrane. The protein operates within cell wall biogenesis; lipoteichoic acid biosynthesis. Functionally, O-acyltransferase that catalyzes D-alanylation of both teichoic acid and lipoteichoic acid (LTA). D-alanylation of LTA plays an important role in modulating the properties of the cell wall in Gram-positive bacteria, influencing the net charge of the cell wall. Catalyzes D-alanylation from DltC carrier protein. This Lacticaseibacillus rhamnosus (Lactobacillus rhamnosus) protein is Teichoic acid D-alanyltransferase.